A 378-amino-acid polypeptide reads, in one-letter code: 3-dehydroquinate synthase (378 aa).

Residues 115–119 (GVVGD), 139–140 (TS), Lys-152, and Lys-161 each bind NAD(+). Glu-194, His-256, and His-275 together coordinate Zn(2+).

The protein belongs to the sugar phosphate cyclases superfamily. Dehydroquinate synthase family. It depends on Co(2+) as a cofactor. Zn(2+) is required as a cofactor. The cofactor is NAD(+).

It localises to the cytoplasm. It carries out the reaction 7-phospho-2-dehydro-3-deoxy-D-arabino-heptonate = 3-dehydroquinate + phosphate. It functions in the pathway metabolic intermediate biosynthesis; chorismate biosynthesis; chorismate from D-erythrose 4-phosphate and phosphoenolpyruvate: step 2/7. In terms of biological role, catalyzes the conversion of 3-deoxy-D-arabino-heptulosonate 7-phosphate (DAHP) to dehydroquinate (DHQ). The sequence is that of 3-dehydroquinate synthase from Brucella abortus biovar 1 (strain 9-941).